Consider the following 279-residue polypeptide: Putative pyruvate, phosphate dikinase regulatory protein (279 aa).

Residue 153-160 coordinates ADP; sequence GVSRTSKT.

Belongs to the pyruvate, phosphate/water dikinase regulatory protein family. PDRP subfamily.

It catalyses the reaction N(tele)-phospho-L-histidyl/L-threonyl-[pyruvate, phosphate dikinase] + ADP = N(tele)-phospho-L-histidyl/O-phospho-L-threonyl-[pyruvate, phosphate dikinase] + AMP + H(+). It carries out the reaction N(tele)-phospho-L-histidyl/O-phospho-L-threonyl-[pyruvate, phosphate dikinase] + phosphate + H(+) = N(tele)-phospho-L-histidyl/L-threonyl-[pyruvate, phosphate dikinase] + diphosphate. Its function is as follows. Bifunctional serine/threonine kinase and phosphorylase involved in the regulation of the pyruvate, phosphate dikinase (PPDK) by catalyzing its phosphorylation/dephosphorylation. The sequence is that of Putative pyruvate, phosphate dikinase regulatory protein from Bradyrhizobium diazoefficiens (strain JCM 10833 / BCRC 13528 / IAM 13628 / NBRC 14792 / USDA 110).